A 184-amino-acid chain; its full sequence is NADH-quinone oxidoreductase subunit B (184 aa).

[4Fe-4S] cluster-binding residues include Cys-37, Cys-38, Cys-103, and Cys-132.

The protein belongs to the complex I 20 kDa subunit family. NDH-1 is composed of 14 different subunits. Subunits NuoB, C, D, E, F, and G constitute the peripheral sector of the complex. The cofactor is [4Fe-4S] cluster.

The protein resides in the cell membrane. The enzyme catalyses a quinone + NADH + 5 H(+)(in) = a quinol + NAD(+) + 4 H(+)(out). Its function is as follows. NDH-1 shuttles electrons from NADH, via FMN and iron-sulfur (Fe-S) centers, to quinones in the respiratory chain. The immediate electron acceptor for the enzyme in this species is believed to be a menaquinone. Couples the redox reaction to proton translocation (for every two electrons transferred, four hydrogen ions are translocated across the cytoplasmic membrane), and thus conserves the redox energy in a proton gradient. The polypeptide is NADH-quinone oxidoreductase subunit B (Mycobacterium marinum (strain ATCC BAA-535 / M)).